The chain runs to 317 residues: Peroxidase 64 (317 aa).

The first 22 residues, M1–A22, serve as a signal peptide directing secretion. Intrachain disulfides connect C32–C111, C65–C70, C117–C313, and C195–C227. Catalysis depends on H63, which acts as the Proton acceptor. Ca(2+) is bound by residues D64, V67, G69, D71, and S73. Substrate is bound at residue P158. N163 is a glycosylation site (N-linked (GlcNAc...) asparagine). H188 is a heme b binding site. Ca(2+) is bound at residue T189. Positions 241, 243, and 248 each coordinate Ca(2+).

The protein belongs to the peroxidase family. Classical plant (class III) peroxidase subfamily. Heme b serves as cofactor. Requires Ca(2+) as cofactor. As to expression, expressed in the whole plant, but preferentially in roots.

It is found in the secreted. The enzyme catalyses 2 a phenolic donor + H2O2 = 2 a phenolic radical donor + 2 H2O. Removal of H(2)O(2), oxidation of toxic reductants, biosynthesis and degradation of lignin, suberization, auxin catabolism, response to environmental stresses such as wounding, pathogen attack and oxidative stress. These functions might be dependent on each isozyme/isoform in each plant tissue. The sequence is that of Peroxidase 64 (PER64) from Arabidopsis thaliana (Mouse-ear cress).